Consider the following 306-residue polypeptide: Putative beta-lactamase HcpD (306 aa).

Residues 1–25 form the signal peptide; it reads MIKSWTKKWFLILFLMASCSSYLVA. 4 TPR repeats span residues 28 to 61, 96 to 133, 168 to 205, and 240 to 277; these read GEKY…RVGV, HLAC…KGGV, GISC…KDGA, and GSGC…GFSG. 7 cysteine pairs are disulfide-bonded: Cys55–Cys63, Cys91–Cys99, Cys127–Cys135, Cys163–Cys171, Cys199–Cys207, Cys235–Cys243, and Cys271–Cys279.

Belongs to the hcp beta-lactamase family.

The protein resides in the secreted. It catalyses the reaction a beta-lactam + H2O = a substituted beta-amino acid. Its function is as follows. May hydrolyze 6-aminopenicillinic acid and 7-aminocephalosporanic acid (ACA) derivatives. Binds to penicillin. This Helicobacter pylori (strain ATCC 700392 / 26695) (Campylobacter pylori) protein is Putative beta-lactamase HcpD (hcpD).